Here is a 109-residue protein sequence, read N- to C-terminus: Nucleoid-associated protein CGSHiEE_00780 (109 aa).

It belongs to the YbaB/EbfC family. In terms of assembly, homodimer.

It is found in the cytoplasm. The protein localises to the nucleoid. Its function is as follows. Binds to DNA and alters its conformation. May be involved in regulation of gene expression, nucleoid organization and DNA protection. This Haemophilus influenzae (strain PittEE) protein is Nucleoid-associated protein CGSHiEE_00780.